The sequence spans 651 residues: DNA mismatch repair protein MutL (651 aa).

This sequence belongs to the DNA mismatch repair MutL/HexB family.

Its function is as follows. This protein is involved in the repair of mismatches in DNA. It is required for dam-dependent methyl-directed DNA mismatch repair. May act as a 'molecular matchmaker', a protein that promotes the formation of a stable complex between two or more DNA-binding proteins in an ATP-dependent manner without itself being part of a final effector complex. The polypeptide is DNA mismatch repair protein MutL (Streptococcus mutans serotype c (strain ATCC 700610 / UA159)).